The sequence spans 447 residues: Mitogen-activated protein kinase HOG1 (447 aa).

The 280-residue stretch at Tyr23–Leu302 folds into the Protein kinase domain. Residues Val29–Val37 and Lys52 contribute to the ATP site. Residue Asp144 is the Proton acceptor of the active site. Residue Thr174 is modified to Phosphothreonine. Residues Thr174–Tyr176 carry the TXY motif. Residue Tyr176 is modified to Phosphotyrosine. The interval Leu394–Thr414 is disordered. Over residues Val401 to Thr414 the composition is skewed to polar residues.

The protein belongs to the protein kinase superfamily. Ser/Thr protein kinase family. MAP kinase subfamily. HOG1 sub-subfamily. The cofactor is Mg(2+). In terms of processing, dually phosphorylated on Thr-174 and Tyr-176, which activates the enzyme.

It localises to the cytoplasm. Its subcellular location is the nucleus. It catalyses the reaction L-seryl-[protein] + ATP = O-phospho-L-seryl-[protein] + ADP + H(+). The enzyme catalyses L-threonyl-[protein] + ATP = O-phospho-L-threonyl-[protein] + ADP + H(+). Its activity is regulated as follows. Activated by tyrosine and threonine phosphorylation. In terms of biological role, proline-directed serine/threonine-protein kinase involved in a signal transduction pathway that is activated by changes in the osmolarity of the extracellular environment. Controls osmotic regulation of transcription of target genes. In Candida glabrata (strain ATCC 2001 / BCRC 20586 / JCM 3761 / NBRC 0622 / NRRL Y-65 / CBS 138) (Yeast), this protein is Mitogen-activated protein kinase HOG1 (HOG1).